The chain runs to 189 residues: MTKPLILASQSPRRKELLDLLQLPYSIIVSEVEEKLNRNFSPEENVQWLAKQKAKAVADLHPHAIVIGADTMVCLDGECLGKPQDQEEAASMLRRLSGRSHSVITAVSIQAENHSETFYDKTEVAFWSLSEEEIWTYIETKEPMDKAGAYGIQGRGALFVKKIDGDYYSVMGLPISKTMRALRHFDIRA.

Aspartate 70 (proton acceptor) is an active-site residue. The cysteines at positions 74 and 79 are disulfide-linked.

The protein belongs to the Maf family. YhdE subfamily. In terms of assembly, homodimer. A divalent metal cation serves as cofactor.

The protein resides in the cytoplasm. The enzyme catalyses dTTP + H2O = dTMP + diphosphate + H(+). The catalysed reaction is UTP + H2O = UMP + diphosphate + H(+). It carries out the reaction CTP + H2O = CMP + diphosphate + H(+). It catalyses the reaction psi-UTP + H2O = psi-UMP + diphosphate + H(+). The enzyme catalyses 5-methyl-CTP + H2O = 5-methyl-CMP + diphosphate + H(+). The catalysed reaction is 5-methyl-UTP + H2O = 5-methyl-UMP + diphosphate + H(+). Functionally, nucleoside triphosphate pyrophosphatase that hydrolyzes dTTP and UTP. Can also hydrolyze CTP and the modified nucleotides pseudo-UTP, 5-methyl-CTP (m(5)CTP) and 5-methyl-UTP (m(5)UTP). May have a dual role in cell division arrest and in preventing the incorporation of modified nucleotides into cellular nucleic acids. The sequence is that of dTTP/UTP pyrophosphatase from Bacillus subtilis (strain 168).